Consider the following 603-residue polypeptide: MLFRASQPEDKPMKMTTEEAFVKTLQMHGIQHAFGIIGSAMMPISDIFGKAGITFWDCAHEGSGGMMADGYTRATGKMSMMIAQNGPGITNFVTAVKTAYWNHTPLLLVTPQAANKTMGQGGFQEVEQMAAFKDMVCYQEEVRDPTRMAEVLNRVILNAKRYSAPAQINVPRDYFTQVIDIELPKIVDFERPSGGEEALDEAAKLLSEAKFPVILNGAGVILAGAIPATAELAERLDAPVCCGYQHNDAFPGSHPLHAGPLGYNGSKAGMELISKADVVLALGTRLNPFSTLPGYGIDYWPKDAKIIQVDVKPERIGLTKPVAVGIVGDAKKVAKTILAKLSDTAGDADREERKATIAKTKSAWAQELSSMDHEQDDPGTTWNERARGAKPDWMSPRMAWRAIQAALPKEAIISSDIGNNCAIGNAYPSFEEGRKYLAPGLFGPCGYGLPAVVGAKIGCPDTPVVGFSGDGAFGIAVNELTAIGRGEWPAVTHVVFRNYQWGAEKRNSTLWFDDNFVGTELDEQVSYAGIAKACGLKGVVARTMDELTDALDQAIKDQKAGTTTLIEAMINQELGEPFRRDAMKKPVAVAGIDPADMREQQVD.

This sequence belongs to the TPP enzyme family. The cofactor is Mg(2+). Thiamine diphosphate serves as cofactor.

The enzyme catalyses acetyl phosphate + sulfite + H(+) = sulfoacetaldehyde + phosphate. Its function is as follows. Catalyzes the degradation of sulfoacetaldehyde into sulfite and acetyl phosphate. Involved in sulfolactate degradation. The protein is Sulfoacetaldehyde acetyltransferase of Roseovarius nubinhibens (strain ATCC BAA-591 / DSM 15170 / ISM).